Consider the following 180-residue polypeptide: Translation initiation factor IF-3 (180 aa).

Belongs to the IF-3 family. In terms of assembly, monomer.

It localises to the cytoplasm. Functionally, IF-3 binds to the 30S ribosomal subunit and shifts the equilibrium between 70S ribosomes and their 50S and 30S subunits in favor of the free subunits, thus enhancing the availability of 30S subunits on which protein synthesis initiation begins. This is Translation initiation factor IF-3 from Klebsiella pneumoniae.